Here is a 2472-residue protein sequence, read N- to C-terminus: Spectrin alpha chain, non-erythrocytic 1 (2472 aa).

The residue at position 1 (Met-1) is an N-acetylmethionine. Spectrin repeat units lie at residues 45–146, 150–251, 256–358, 361–465, 468–570, 574–676, 679–781, 785–888, and 891–961; these read RFQF…IKLL, KLVQ…QGKL, EVQR…ARLD, YRLQ…QYEQ, DLQL…AQLA, HLQQ…KLRE, QQQQ…QKLA, RLQQ…DLED, and QAQQ…QQVA. Ser-587 bears the Phosphoserine mark. Lys-637 bears the N6-acetyllysine mark. At Lys-803 the chain carries N6-acetyllysine. Phosphoserine is present on residues Ser-924, Ser-982, Ser-999, Ser-1029, Ser-1031, and Ser-1041. The 60-residue stretch at 967–1026 folds into the SH3 domain; that stretch reads TGKELVLALYDYQEKSPREVTMKKGDILTLLNSTNKDWWKVEVNDRQGFVPAAYVKKLDP. One copy of the Spectrin 10 repeat lies at 1096-1166; that stretch reads LFREANELQQ…LESEGLMAEE (71 aa). Tyr-1176 bears the Phosphotyrosine mark. Residues Ser-1190, Ser-1207, Ser-1217, Ser-1291, Ser-1306, Ser-1323, and Ser-1338 each carry the phosphoserine modification. Residues 1233-1336 form a Spectrin 11 repeat; it reads HEVQRFHRDA…RADQRKAKLG (104 aa). Spectrin repeat units lie at residues 1339-1441 and 1446-1549; these read HDLQ…RMML and ELQL…KLGE. Position 1519 is an N6-acetyllysine (Lys-1519). 5 positions are modified to phosphoserine: Ser-1550, Ser-1557, Ser-1578, Ser-1615, and Ser-1647. Spectrin repeat units follow at residues 1552–1656, 1659–1762, 1764–1868, 1871–1974, 1978–2081, 2092–2194, and 2206–2310; these read TLQQ…KLKE, KQQN…KLSE, HRLH…RLEE, EYQQ…KLDE, FLQF…KLLE, LFLT…LELQ, and LRQE…NLEQ. Thr-2020 bears the Phosphothreonine mark. Lys-2052 is modified (N6-acetyllysine). Thr-2066 is modified (phosphothreonine). EF-hand domains lie at 2323-2358, 2366-2401, and 2404-2439; these read EALK…LGYD, EPDP…RETE, and KSSE…EQAD. 10 residues coordinate Ca(2+): Asp-2336, Asp-2338, Ser-2340, Arg-2342, Glu-2347, Asp-2379, Asn-2381, Asp-2383, His-2385, and Glu-2390. Position 2421 is an N6-acetyllysine (Lys-2421).

This sequence belongs to the spectrin family. Like erythrocyte spectrin, the spectrin-like proteins are capable of forming dimers which can further associate to tetramers. Interacts (via C-terminal spectrin repeats) with TRPC4. Interacts with CALM and EMD. Interacts with isoform 1 of ACP1. Identified in a complex with ACTN4, CASK, IQGAP1, MAGI2, NPHS1 and SPTBN1. Interacts with SHANK3 (via ANK repeats). Interacts with CLN3; this interaction regulates the fodrin localization at the plasma membrane. Post-translationally, phosphorylation of Tyr-1176 decreases sensitivity to cleavage by calpain in vitro. Expressed in the foot process layer of podocytes in the kidney glomerulus and in tubules (at protein level).

Its subcellular location is the cytoplasm. The protein localises to the cytoskeleton. It localises to the cell cortex. Functionally, fodrin, which seems to be involved in secretion, interacts with calmodulin in a calcium-dependent manner and is thus candidate for the calcium-dependent movement of the cytoskeleton at the membrane. The polypeptide is Spectrin alpha chain, non-erythrocytic 1 (Sptan1) (Rattus norvegicus (Rat)).